We begin with the raw amino-acid sequence, 581 residues long: ATP-dependent lipid A-core flippase (581 aa).

5 helical membrane passes run L15–L35, L68–I88, I152–V172, P252–P272, and I274–M294. The ABC transmembrane type-1 domain occupies I27–R309. The ABC transporter domain occupies I341–M577. G375–S382 lines the ATP pocket.

Belongs to the ABC transporter superfamily. Lipid exporter (TC 3.A.1.106) family. As to quaternary structure, homodimer.

It localises to the cell inner membrane. The catalysed reaction is ATP + H2O + lipid A-core oligosaccharideSide 1 = ADP + phosphate + lipid A-core oligosaccharideSide 2.. Involved in lipopolysaccharide (LPS) biosynthesis. Translocates lipid A-core from the inner to the outer leaflet of the inner membrane. Transmembrane domains (TMD) form a pore in the inner membrane and the ATP-binding domain (NBD) is responsible for energy generation. The protein is ATP-dependent lipid A-core flippase of Photorhabdus laumondii subsp. laumondii (strain DSM 15139 / CIP 105565 / TT01) (Photorhabdus luminescens subsp. laumondii).